A 616-amino-acid polypeptide reads, in one-letter code: Chaperone protein HtpG (616 aa).

An a; substrate-binding region spans residues 1 to 333 (MKKQFDTEVN…CQDLPLNVSR (333 aa)). The interval 334-542 (EILQQNKILS…SNDPTYQMQK (209 aa)) is b. Residues 543-616 (IMLSMGQEVK…INEFIEKDFL (74 aa)) are c.

The protein belongs to the heat shock protein 90 family. In terms of assembly, homodimer.

The protein resides in the cytoplasm. In terms of biological role, molecular chaperone. Has ATPase activity. This is Chaperone protein HtpG from Borreliella burgdorferi (strain ATCC 35210 / DSM 4680 / CIP 102532 / B31) (Borrelia burgdorferi).